Here is a 113-residue protein sequence, read N- to C-terminus: Hydrogenase maturation factor HypA (113 aa).

Ni(2+) is bound at residue histidine 2. 4 residues coordinate Zn(2+): cysteine 73, cysteine 76, cysteine 89, and cysteine 92.

This sequence belongs to the HypA/HybF family.

In terms of biological role, involved in the maturation of [NiFe] hydrogenases. Required for nickel insertion into the metal center of the hydrogenase. The chain is Hydrogenase maturation factor HypA from Azorhizobium caulinodans (strain ATCC 43989 / DSM 5975 / JCM 20966 / LMG 6465 / NBRC 14845 / NCIMB 13405 / ORS 571).